The following is a 98-amino-acid chain: Phosphoribosyl-ATP pyrophosphatase (98 aa).

The protein belongs to the PRA-PH family.

The protein localises to the cytoplasm. The catalysed reaction is 1-(5-phospho-beta-D-ribosyl)-ATP + H2O = 1-(5-phospho-beta-D-ribosyl)-5'-AMP + diphosphate + H(+). It participates in amino-acid biosynthesis; L-histidine biosynthesis; L-histidine from 5-phospho-alpha-D-ribose 1-diphosphate: step 2/9. In Haloarcula marismortui (strain ATCC 43049 / DSM 3752 / JCM 8966 / VKM B-1809) (Halobacterium marismortui), this protein is Phosphoribosyl-ATP pyrophosphatase.